Here is a 727-residue protein sequence, read N- to C-terminus: MPKNSKVTQREHSNEHVTESVADLLALEEPVDYKQSVLNVAGETGGKQKVAEEELDTEDRPAWNSKLQYILAQIGFSVGLGNIWRFPYLCQKNGGGAYLVPYLVLLIIIGIPLFFLELAVGQRIRRGSIGVWHYVCPRLGGIGFSSCIVCLFVGLYYNVIIGWSVFYFFKSFQYPLPWSECPVIRNGTVAVVEPECEKSSATTYFWYREALDISNSISESGGLNWKMTLCLLVAWSIVGMAVVKGIQSSGKVMYFSSLFPYVVLACFLVRGLLLRGAVDGILHMFTPKLDKMLDPQVWREAATQVFFALGLGFGGVIAFSSYNKQDNNCHFDAALVSFINFFTSVLATLVVFAVLGFKANIMNEKCVVENAEKILGYLNSNVLSRDLIPPHVNFSHLTTKDYSEMYSVIMTVKEKQFPALGLDPCLLEDELDKSVQGTGLAFIAFTEAMTHFPASPFWSVMFFLMLINLGLGSMIGTMAGITTPIIDTFKVPKEMFTVGCCVFAFFVGLLFVQRSGNYFVTMFDDYSATLPLTVIVILENIAVAWIYGTKKFMQELTEMLGFQPYRFYFYMWKFVSPLCMAVLTTASIIQLGVSPPGYSAWIKEEAAERYLYFPNWAMALLITLIAVATLPIPVVFILRHFHLLSDGSNTLSVSYKKGRMMKDISNLEENDETRFILSKVPSEAPSPMPTHRSYLGPGSTSPLDNSNNPNGRYGSGYLLASTPESEL.

Residues 1–68 (MPKNSKVTQR…DRPAWNSKLQ (68 aa)) lie on the Cytoplasmic side of the membrane. Phosphoserine is present on residues serine 13 and serine 20. Residues 69–89 (YILAQIGFSVGLGNIWRFPYL) form a helical membrane-spanning segment. Residues 90 to 96 (CQKNGGG) are Extracellular-facing. Residues 97 to 116 (AYLVPYLVLLIIIGIPLFFL) traverse the membrane as a helical segment. At 117–140 (ELAVGQRIRRGSIGVWHYVCPRLG) the chain is on the cytoplasmic side. A helical membrane pass occupies residues 141–161 (GIGFSSCIVCLFVGLYYNVII). Residues 162-224 (GWSVFYFFKS…NSISESGGLN (63 aa)) lie on the Extracellular side of the membrane. N-linked (GlcNAc...) asparagine glycosylation is present at asparagine 186. Residues 225-243 (WKMTLCLLVAWSIVGMAVV) form a helical membrane-spanning segment. Over 244 to 251 (KGIQSSGK) the chain is Cytoplasmic. Residues 252 to 269 (VMYFSSLFPYVVLACFLV) form a helical membrane-spanning segment. Topologically, residues 270–304 (RGLLLRGAVDGILHMFTPKLDKMLDPQVWREAATQ) are extracellular. A helical membrane pass occupies residues 305–322 (VFFALGLGFGGVIAFSSY). The Cytoplasmic portion of the chain corresponds to 323–333 (NKQDNNCHFDA). A helical membrane pass occupies residues 334–355 (ALVSFINFFTSVLATLVVFAVL). At 356-451 (GFKANIMNEK…FIAFTEAMTH (96 aa)) the chain is on the extracellular side. The residue at position 377 (tyrosine 377) is a Phosphotyrosine. Asparagine 393 is a glycosylation site (N-linked (GlcNAc...) asparagine). The helical transmembrane segment at 452–471 (FPASPFWSVMFFLMLINLGL) threads the bilayer. Residues 472 to 494 (GSMIGTMAGITTPIIDTFKVPKE) are Cytoplasmic-facing. The helical transmembrane segment at 495–513 (MFTVGCCVFAFFVGLLFVQ) threads the bilayer. At 514 to 528 (RSGNYFVTMFDDYSA) the chain is on the extracellular side. A helical transmembrane segment spans residues 529 to 549 (TLPLTVIVILENIAVAWIYGT). Over 550-569 (KKFMQELTEMLGFQPYRFYF) the chain is Cytoplasmic. Residues 570-591 (YMWKFVSPLCMAVLTTASIIQL) traverse the membrane as a helical segment. Topologically, residues 592 to 618 (GVSPPGYSAWIKEEAAERYLYFPNWAM) are extracellular. The chain crosses the membrane as a helical span at residues 619–641 (ALLITLIAVATLPIPVVFILRHF). Residues 642-727 (HLLSDGSNTL…LLASTPESEL (86 aa)) are Cytoplasmic-facing. Serine 665 and serine 701 each carry phosphoserine. The segment at 680–727 (VPSEAPSPMPTHRSYLGPGSTSPLDNSNNPNGRYGSGYLLASTPESEL) is disordered. Positions 698–710 (GSTSPLDNSNNPN) are enriched in polar residues.

This sequence belongs to the sodium:neurotransmitter symporter (SNF) (TC 2.A.22) family. As to expression, expressed in the brain. The strongest expression levels in embryonic, postnatal, and adult stages are found in both cortical and hippocampal tissues.

It is found in the cytoplasmic vesicle. Its subcellular location is the secretory vesicle. The protein localises to the synaptic vesicle membrane. It localises to the postsynapse. The protein resides in the presynapse. It carries out the reaction L-proline(in) + Na(+)(in) = L-proline(out) + Na(+)(out). The enzyme catalyses L-leucine(in) + Na(+)(in) = L-leucine(out) + Na(+)(out). The catalysed reaction is glycine(in) + Na(+)(in) = glycine(out) + Na(+)(out). It catalyses the reaction L-alanine(in) + Na(+)(in) = L-alanine(out) + Na(+)(out). It carries out the reaction L-glutamine(in) + Na(+)(in) = L-glutamine(out) + Na(+)(out). In terms of biological role, synaptic vesicle transporter with apparent selectivity for neutral amino acids. The transport is sodium-coupled but chloride-independent, likely driven by the proton electrochemical gradient generated by vacuolar H(+)-ATPase in an overall electrogenic mechanism. May contribute to the synaptic uptake of neurotransmitter precursors in a process coupled in part to vesicle exocytosis. The polypeptide is Sodium-dependent neutral amino acid transporter SLC6A17 (Mus musculus (Mouse)).